The sequence spans 963 residues: Bifunctional glutamine synthetase adenylyltransferase/adenylyl-removing enzyme (963 aa).

Positions 1–453 (MLTTLIPLSQ…IFNEIIGEEE (453 aa)) are adenylyl removase. The adenylyl transferase stretch occupies residues 461–963 (VNEKLAEWKD…VREMWQRLLA (503 aa)).

The protein belongs to the GlnE family. The cofactor is Mg(2+).

The enzyme catalyses [glutamine synthetase]-O(4)-(5'-adenylyl)-L-tyrosine + phosphate = [glutamine synthetase]-L-tyrosine + ADP. It carries out the reaction [glutamine synthetase]-L-tyrosine + ATP = [glutamine synthetase]-O(4)-(5'-adenylyl)-L-tyrosine + diphosphate. Involved in the regulation of glutamine synthetase GlnA, a key enzyme in the process to assimilate ammonia. When cellular nitrogen levels are high, the C-terminal adenylyl transferase (AT) inactivates GlnA by covalent transfer of an adenylyl group from ATP to specific tyrosine residue of GlnA, thus reducing its activity. Conversely, when nitrogen levels are low, the N-terminal adenylyl removase (AR) activates GlnA by removing the adenylyl group by phosphorolysis, increasing its activity. The regulatory region of GlnE binds the signal transduction protein PII (GlnB) which indicates the nitrogen status of the cell. In Mannheimia haemolytica (Pasteurella haemolytica), this protein is Bifunctional glutamine synthetase adenylyltransferase/adenylyl-removing enzyme.